We begin with the raw amino-acid sequence, 459 residues long: Elongation factor 1-alpha 1 (459 aa).

The tr-type G domain maps to 5-242; the sequence is KTHINIVVIG…DCIIPPQRPT (238 aa). Residues 14–21 form a G1 region; it reads GHVDSGKS. Residues 70–74 are G2; sequence GITID. The interval 91–94 is G3; the sequence is DAPG. Residues 153 to 156 form a G4 region; it reads NKMD. The segment at 194 to 196 is G5; it reads SGF. 5-glutamyl glycerylphosphorylethanolamine is present on residues Glu301 and Glu374.

It belongs to the TRAFAC class translation factor GTPase superfamily. Classic translation factor GTPase family. EF-Tu/EF-1A subfamily.

The protein resides in the cytoplasm. In terms of biological role, this protein promotes the GTP-dependent binding of aminoacyl-tRNA to the A-site of ribosomes during protein biosynthesis. The sequence is that of Elongation factor 1-alpha 1 (eft-1) from Oscheius tipulae.